Reading from the N-terminus, the 648-residue chain is Replication restart protein PriA (648 aa).

Residues 131–297 (TILNESNKPT…EIGKYQLVTL (167 aa)) form the Helicase ATP-binding domain. An ATP-binding site is contributed by 144 to 151 (GVTGSGKT). Residues 240–243 (DEEH) carry the DEAH box motif. 8 residues coordinate Zn(2+): cysteine 358, cysteine 361, cysteine 367, cysteine 370, cysteine 385, cysteine 388, cysteine 398, and cysteine 401. In terms of domain architecture, Helicase C-terminal spans 393–548 (KIFSSCPECL…SFFANELEIR (156 aa)).

The protein belongs to the helicase family. PriA subfamily. Component of the replication restart primosome. It depends on Zn(2+) as a cofactor.

It catalyses the reaction Couples ATP hydrolysis with the unwinding of duplex DNA by translocating in the 3'-5' direction.. The catalysed reaction is ATP + H2O = ADP + phosphate + H(+). Initiates the restart of stalled replication forks, which reloads the replicative helicase on sites other than the origin of replication. Recognizes and binds to abandoned replication forks and remodels them to uncover a helicase loading site. Promotes assembly of the primosome at these replication forks. The chain is Replication restart protein PriA from Rickettsia conorii (strain ATCC VR-613 / Malish 7).